A 146-amino-acid chain; its full sequence is Large ribosomal subunit protein uL15 (146 aa).

A disordered region spans residues 18–45 (VLGRGLGCGKGKTSGRGHKGQKARSGCA). A compositionally biased stretch (basic residues) spans 30 to 39 (TSGRGHKGQK).

This sequence belongs to the universal ribosomal protein uL15 family. Part of the 50S ribosomal subunit.

In terms of biological role, binds to the 23S rRNA. This chain is Large ribosomal subunit protein uL15, found in Anaplasma marginale (strain St. Maries).